A 289-amino-acid polypeptide reads, in one-letter code: Shikimate dehydrogenase (NADP(+)) (289 aa).

Residues serine 20–serine 22 and serine 67 each bind shikimate. The active-site Proton acceptor is lysine 71. Aspartate 83 is an NADP(+) binding site. 2 residues coordinate shikimate: asparagine 92 and aspartate 107. NADP(+) is bound by residues glycine 132–alanine 136 and valine 230. Residue tyrosine 232 coordinates shikimate. Glycine 253 serves as a coordination point for NADP(+).

It belongs to the shikimate dehydrogenase family. Homodimer.

The catalysed reaction is shikimate + NADP(+) = 3-dehydroshikimate + NADPH + H(+). Its pathway is metabolic intermediate biosynthesis; chorismate biosynthesis; chorismate from D-erythrose 4-phosphate and phosphoenolpyruvate: step 4/7. Functionally, involved in the biosynthesis of the chorismate, which leads to the biosynthesis of aromatic amino acids. Catalyzes the reversible NADPH linked reduction of 3-dehydroshikimate (DHSA) to yield shikimate (SA). This chain is Shikimate dehydrogenase (NADP(+)), found in Streptococcus suis (strain 98HAH33).